The following is a 476-amino-acid chain: ATP synthase subunit beta 2 (476 aa).

Position 160 to 167 (160 to 167) interacts with ATP; sequence GGAGVGKT.

This sequence belongs to the ATPase alpha/beta chains family. F-type ATPases have 2 components, CF(1) - the catalytic core - and CF(0) - the membrane proton channel. CF(1) has five subunits: alpha(3), beta(3), gamma(1), delta(1), epsilon(1). CF(0) has four main subunits: a(1), b(1), b'(1) and c(9-12).

It is found in the cell inner membrane. It carries out the reaction ATP + H2O + 4 H(+)(in) = ADP + phosphate + 5 H(+)(out). Its function is as follows. Produces ATP from ADP in the presence of a proton gradient across the membrane. The catalytic sites are hosted primarily by the beta subunits. The protein is ATP synthase subunit beta 2 of Bradyrhizobium sp. (strain BTAi1 / ATCC BAA-1182).